Reading from the N-terminus, the 108-residue chain is Transcription initiation factor IIA subunit 2 (108 aa).

The protein belongs to the TFIIA subunit 2 family. TFIIA is a heterodimer of the large unprocessed subunit 1 and a small subunit gamma. It was originally believed to be a heterotrimer of an alpha, a beta and a gamma subunit. Interacts with NCOA6 general coactivator. TFIIA forms a complex with TBP.

It is found in the nucleus. Functionally, TFIIA is a component of the transcription machinery of RNA polymerase II and plays an important role in transcriptional activation. TFIIA in a complex with TBP mediates transcriptional activity. The protein is Transcription initiation factor IIA subunit 2 (gtf2a2) of Oncorhynchus mykiss (Rainbow trout).